Consider the following 388-residue polypeptide: Succinate--CoA ligase [ADP-forming] subunit beta (388 aa).

In terms of domain architecture, ATP-grasp spans 9 to 244 (KDLLSSYDIA…PSQENVRDVL (236 aa)). ATP is bound by residues Lys46, 53–55 (GRG), Val102, and Glu107. 2 residues coordinate Mg(2+): Asn199 and Asp213. Substrate is bound by residues Asn264 and 321–323 (GIM).

It belongs to the succinate/malate CoA ligase beta subunit family. In terms of assembly, heterotetramer of two alpha and two beta subunits. Mg(2+) serves as cofactor.

The enzyme catalyses succinate + ATP + CoA = succinyl-CoA + ADP + phosphate. It catalyses the reaction GTP + succinate + CoA = succinyl-CoA + GDP + phosphate. The protein operates within carbohydrate metabolism; tricarboxylic acid cycle; succinate from succinyl-CoA (ligase route): step 1/1. In terms of biological role, succinyl-CoA synthetase functions in the citric acid cycle (TCA), coupling the hydrolysis of succinyl-CoA to the synthesis of either ATP or GTP and thus represents the only step of substrate-level phosphorylation in the TCA. The beta subunit provides nucleotide specificity of the enzyme and binds the substrate succinate, while the binding sites for coenzyme A and phosphate are found in the alpha subunit. The sequence is that of Succinate--CoA ligase [ADP-forming] subunit beta from Chlamydia felis (strain Fe/C-56) (Chlamydophila felis).